Reading from the N-terminus, the 320-residue chain is Probable trehalose-phosphate phosphatase C (320 aa).

Belongs to the trehalose phosphatase family. A divalent metal cation is required as a cofactor.

It catalyses the reaction alpha,alpha-trehalose 6-phosphate + H2O = alpha,alpha-trehalose + phosphate. The protein operates within glycan biosynthesis; trehalose biosynthesis. Functionally, removes the phosphate from trehalose 6-phosphate to produce free trehalose. Trehalose accumulation in plant may improve abiotic stress tolerance. The chain is Probable trehalose-phosphate phosphatase C (TPPC) from Arabidopsis thaliana (Mouse-ear cress).